The sequence spans 482 residues: 2-succinylbenzoate--CoA ligase (482 aa).

The protein belongs to the ATP-dependent AMP-binding enzyme family. MenE subfamily.

The catalysed reaction is 2-succinylbenzoate + ATP + CoA = 2-succinylbenzoyl-CoA + AMP + diphosphate. It participates in quinol/quinone metabolism; 1,4-dihydroxy-2-naphthoate biosynthesis; 1,4-dihydroxy-2-naphthoate from chorismate: step 5/7. Its pathway is quinol/quinone metabolism; menaquinone biosynthesis. Functionally, converts 2-succinylbenzoate (OSB) to 2-succinylbenzoyl-CoA (OSB-CoA). This is 2-succinylbenzoate--CoA ligase from Bacillus cereus (strain AH820).